The primary structure comprises 329 residues: Beta-ketoacyl-[acyl-carrier-protein] synthase III (329 aa).

Residues Cys-114 and His-255 contribute to the active site. The tract at residues Gln-256–Arg-260 is ACP-binding. Asn-285 is an active-site residue.

This sequence belongs to the thiolase-like superfamily. FabH family. Homodimer.

The protein resides in the cytoplasm. It catalyses the reaction malonyl-[ACP] + acetyl-CoA + H(+) = 3-oxobutanoyl-[ACP] + CO2 + CoA. The protein operates within lipid metabolism; fatty acid biosynthesis. In terms of biological role, catalyzes the condensation reaction of fatty acid synthesis by the addition to an acyl acceptor of two carbons from malonyl-ACP. Catalyzes the first condensation reaction which initiates fatty acid synthesis and may therefore play a role in governing the total rate of fatty acid production. Possesses both acetoacetyl-ACP synthase and acetyl transacylase activities. Its substrate specificity determines the biosynthesis of branched-chain and/or straight-chain of fatty acids. The chain is Beta-ketoacyl-[acyl-carrier-protein] synthase III from Thermosynechococcus vestitus (strain NIES-2133 / IAM M-273 / BP-1).